Here is a 949-residue protein sequence, read N- to C-terminus: Valine--tRNA ligase (949 aa).

The 'HIGH' region signature appears at 40–50; the sequence is PNVTGSLHMGH. The 'KMSKS' region motif lies at 553 to 557; sequence KMSKS. K556 contributes to the ATP binding site. Residues 877 to 949 are a coiled coil; the sequence is MAGLIDKEAE…QEQQDKIKAL (73 aa).

This sequence belongs to the class-I aminoacyl-tRNA synthetase family. ValS type 1 subfamily. Monomer.

It localises to the cytoplasm. The enzyme catalyses tRNA(Val) + L-valine + ATP = L-valyl-tRNA(Val) + AMP + diphosphate. Its function is as follows. Catalyzes the attachment of valine to tRNA(Val). As ValRS can inadvertently accommodate and process structurally similar amino acids such as threonine, to avoid such errors, it has a 'posttransfer' editing activity that hydrolyzes mischarged Thr-tRNA(Val) in a tRNA-dependent manner. The sequence is that of Valine--tRNA ligase from Idiomarina loihiensis (strain ATCC BAA-735 / DSM 15497 / L2-TR).